Consider the following 207-residue polypeptide: Holliday junction branch migration complex subunit RuvA (207 aa).

The segment at 1–64 is domain I; the sequence is MIGLINGQVQ…EDAQLLYGFI (64 aa). Residues 65–143 are domain II; sequence DRKERDVFRQ…NIEVDSSHLE (79 aa). Residues 144–152 are flexible linker; the sequence is FAMQPAPIS. The domain III stretch occupies residues 153–207; that stretch reads AEGSIIAEVEGALISLGYKEREAQQAIKAAKSNGETFADTQSLLKATLQQFQSFK.

This sequence belongs to the RuvA family. In terms of assembly, homotetramer. Forms an RuvA(8)-RuvB(12)-Holliday junction (HJ) complex. HJ DNA is sandwiched between 2 RuvA tetramers; dsDNA enters through RuvA and exits via RuvB. An RuvB hexamer assembles on each DNA strand where it exits the tetramer. Each RuvB hexamer is contacted by two RuvA subunits (via domain III) on 2 adjacent RuvB subunits; this complex drives branch migration. In the full resolvosome a probable DNA-RuvA(4)-RuvB(12)-RuvC(2) complex forms which resolves the HJ.

The protein resides in the cytoplasm. Its function is as follows. The RuvA-RuvB-RuvC complex processes Holliday junction (HJ) DNA during genetic recombination and DNA repair, while the RuvA-RuvB complex plays an important role in the rescue of blocked DNA replication forks via replication fork reversal (RFR). RuvA specifically binds to HJ cruciform DNA, conferring on it an open structure. The RuvB hexamer acts as an ATP-dependent pump, pulling dsDNA into and through the RuvAB complex. HJ branch migration allows RuvC to scan DNA until it finds its consensus sequence, where it cleaves and resolves the cruciform DNA. The chain is Holliday junction branch migration complex subunit RuvA from Psychrobacter cryohalolentis (strain ATCC BAA-1226 / DSM 17306 / VKM B-2378 / K5).